The primary structure comprises 502 residues: Glycerol kinase (502 aa).

Threonine 14 provides a ligand contact to ADP. Threonine 14 and threonine 15 together coordinate ATP. Sn-glycerol 3-phosphate is bound at residue threonine 14. Arginine 18 provides a ligand contact to ADP. Sn-glycerol 3-phosphate is bound by residues arginine 84, glutamate 85, tyrosine 136, and aspartate 245. Residues arginine 84, glutamate 85, tyrosine 136, aspartate 245, and glutamine 246 each contribute to the glycerol site. ADP is bound by residues threonine 267 and glycine 314. ATP contacts are provided by threonine 267, glycine 314, glutamine 318, and glycine 415. Residues glycine 415 and asparagine 419 each contribute to the ADP site.

It belongs to the FGGY kinase family.

It catalyses the reaction glycerol + ATP = sn-glycerol 3-phosphate + ADP + H(+). Its pathway is polyol metabolism; glycerol degradation via glycerol kinase pathway; sn-glycerol 3-phosphate from glycerol: step 1/1. Its activity is regulated as follows. Inhibited by fructose 1,6-bisphosphate (FBP). In terms of biological role, key enzyme in the regulation of glycerol uptake and metabolism. Catalyzes the phosphorylation of glycerol to yield sn-glycerol 3-phosphate. The polypeptide is Glycerol kinase (Acaryochloris marina (strain MBIC 11017)).